A 227-amino-acid chain; its full sequence is Cytochrome c oxidase subunit 2 (227 aa).

At Met-1–Ser-14 the chain is on the mitochondrial intermembrane side. A helical membrane pass occupies residues Pro-15–Met-45. Over Leu-46–Gln-59 the chain is Mitochondrial matrix. A helical transmembrane segment spans residues Glu-60–Met-87. Topologically, residues Asp-88–Val-227 are mitochondrial intermembrane. Cu cation-binding residues include His-161, Cys-196, Glu-198, Cys-200, His-204, and Met-207. Mg(2+) is bound at residue Glu-198. Tyr-218 is modified (phosphotyrosine).

This sequence belongs to the cytochrome c oxidase subunit 2 family. In terms of assembly, component of the cytochrome c oxidase (complex IV, CIV), a multisubunit enzyme composed of 14 subunits. The complex is composed of a catalytic core of 3 subunits MT-CO1, MT-CO2 and MT-CO3, encoded in the mitochondrial DNA, and 11 supernumerary subunits COX4I, COX5A, COX5B, COX6A, COX6B, COX6C, COX7A, COX7B, COX7C, COX8 and NDUFA4, which are encoded in the nuclear genome. The complex exists as a monomer or a dimer and forms supercomplexes (SCs) in the inner mitochondrial membrane with NADH-ubiquinone oxidoreductase (complex I, CI) and ubiquinol-cytochrome c oxidoreductase (cytochrome b-c1 complex, complex III, CIII), resulting in different assemblies (supercomplex SCI(1)III(2)IV(1) and megacomplex MCI(2)III(2)IV(2)). Found in a complex with TMEM177, COA6, COX18, COX20, SCO1 and SCO2. Interacts with TMEM177 in a COX20-dependent manner. Interacts with COX20. Interacts with COX16. It depends on Cu cation as a cofactor.

The protein localises to the mitochondrion inner membrane. The catalysed reaction is 4 Fe(II)-[cytochrome c] + O2 + 8 H(+)(in) = 4 Fe(III)-[cytochrome c] + 2 H2O + 4 H(+)(out). Functionally, component of the cytochrome c oxidase, the last enzyme in the mitochondrial electron transport chain which drives oxidative phosphorylation. The respiratory chain contains 3 multisubunit complexes succinate dehydrogenase (complex II, CII), ubiquinol-cytochrome c oxidoreductase (cytochrome b-c1 complex, complex III, CIII) and cytochrome c oxidase (complex IV, CIV), that cooperate to transfer electrons derived from NADH and succinate to molecular oxygen, creating an electrochemical gradient over the inner membrane that drives transmembrane transport and the ATP synthase. Cytochrome c oxidase is the component of the respiratory chain that catalyzes the reduction of oxygen to water. Electrons originating from reduced cytochrome c in the intermembrane space (IMS) are transferred via the dinuclear copper A center (CU(A)) of subunit 2 and heme A of subunit 1 to the active site in subunit 1, a binuclear center (BNC) formed by heme A3 and copper B (CU(B)). The BNC reduces molecular oxygen to 2 water molecules using 4 electrons from cytochrome c in the IMS and 4 protons from the mitochondrial matrix. This chain is Cytochrome c oxidase subunit 2 (MT-CO2), found in Lycalopex culpaeus (Culpeo fox).